The following is a 155-amino-acid chain: MHYMGLFSRAGNIFRQPRALQASNAMLQGNLSLTPSKIFVGGLSPSTDVELLKEAFGSFGKIVDAVVVLDRESGLSRGFGFVTYDSIEVANNAMQAMQNKELDGRIIGVHPADSGGGGGGGGFARRGGYGGGRGGYARGGFGRGGFGGGGYGFVR.

A mitochondrion-targeting transit peptide spans Met-1–Leu-27. The region spanning Ser-36 to Ser-114 is the RRM domain.

It belongs to the GR-RBP family. In terms of assembly, component of the mitochondrial ribosome small subunit.

The protein resides in the mitochondrion. Its function is as follows. Possibly has a role in RNA transcription or processing during stress. This Arabidopsis thaliana (Mouse-ear cress) protein is Small ribosomal subunit protein mS86 (RBG6).